A 172-amino-acid polypeptide reads, in one-letter code: MPRTQRNDNFIDKTFTVVADILLKVLPTSQREKQAFSYYRNGMSAQAEGEYAEALQNYYEAMRLEVDAYDRSYILYNIGLIHTSNGEHGRALEYYYQALERNPSLSSALNNIAVIYHYRGEQAIENGQSEISQILFEKAADYWKEAIRLAPTNYIEALNWLKMTGRLTGLAT.

TPR repeat units follow at residues 35-68 (AFSYYRNGMSAQAEGEYAEALQNYYEAMRLEVDA), 72-105 (SYILYNIGLIHTSNGEHGRALEYYYQALERNPSL), and 120-153 (GEQAIENGQSEISQILFEKAADYWKEAIRLAPTN).

It belongs to the Ycf3 family.

The protein resides in the plastid. Its subcellular location is the chloroplast thylakoid membrane. In terms of biological role, essential for the assembly of the photosystem I (PSI) complex. May act as a chaperone-like factor to guide the assembly of the PSI subunits. The chain is Photosystem I assembly protein Ycf3 from Chlamydomonas reinhardtii (Chlamydomonas smithii).